Reading from the N-terminus, the 541-residue chain is Nectin 1b (541 aa).

Positions 1–21 are cleaved as a signal peptide; that stretch reads MDKQESFFVGHKSHRCSQNRS. Residues 22 to 396 lie on the Extracellular side of the membrane; sequence VSQIHQRTSR…PAELHSSGAA (375 aa). N-linked (GlcNAc...) asparagine glycans are attached at residues Asn51, Asn105, Asn180, Asn242, Asn326, Asn337, and Asn372. Residues 77-182 form the Ig-like V-type domain; the sequence is GDTVELKCLF…GNRENMVNLT (106 aa). A disulfide bond links Cys84 and Cys165. 2 consecutive Ig-like C2-type domains span residues 187–282 and 287–374; these read PVTK…VILN and PEVK…VNVT. 2 disulfide bridges follow: Cys212/Cys266 and Cys309/Cys356. The helical transmembrane segment at 397 to 417 threads the bilayer; the sequence is IGGAVGGVALLVAAIALLVFF. At 418–541 the chain is on the cytoplasmic side; sequence LRRRQRTFKG…SVISKKEWYV (124 aa). A disordered region spans residues 440–507; the sequence is YSKAGGMPAH…VDEGESRDYD (68 aa). A compositionally biased stretch (basic and acidic residues) spans 479–493; sequence SGDRDFDGNSEDLKR.

The protein belongs to the nectin family. In terms of assembly, cis- and trans-homodimer. Can form trans-heterodimers. In terms of tissue distribution, expressed in the developing eye and nervous system.

It is found in the cell membrane. The protein localises to the cell junction. Its subcellular location is the adherens junction. Cell adhesion molecule that promotes cell-cell contacts and plays important roles in the development of the nervous system. Acts by forming homophilic or heterophilic trans-dimers. In Danio rerio (Zebrafish), this protein is Nectin 1b.